Consider the following 156-residue polypeptide: Cyanate hydratase (156 aa).

Residues arginine 96, glutamate 99, and serine 122 contribute to the active site.

It belongs to the cyanase family.

The catalysed reaction is cyanate + hydrogencarbonate + 3 H(+) = NH4(+) + 2 CO2. In terms of biological role, catalyzes the reaction of cyanate with bicarbonate to produce ammonia and carbon dioxide. In Burkholderia cenocepacia (strain ATCC BAA-245 / DSM 16553 / LMG 16656 / NCTC 13227 / J2315 / CF5610) (Burkholderia cepacia (strain J2315)), this protein is Cyanate hydratase.